Here is an 842-residue protein sequence, read N- to C-terminus: Putative G-type lectin S-receptor-like serine/threonine-protein kinase At1g61610 (842 aa).

An N-terminal signal peptide occupies residues 1-22; that stretch reads MAGFNRNLTLVTTLLIFHQLCS. N-linked (GlcNAc...) asparagine glycans are attached at residues N7, N23, N35, N60, N110, N123, N304, N351, and N380. Residues 23–443 are Extracellular-facing; the sequence is NVSCSTSNSF…KLGGGKENST (421 aa). The 122-residue stretch at 29 to 150 folds into the Bulb-type lectin domain; sequence SNSFTRNHTI…SDRRKWYWES (122 aa). The 40-residue stretch at 292–331 folds into the EGF-like domain; sequence PSTECEKYNRCGNYSVCDDSKEFDSGKCSCIDGFEPVHQD. Disulfide bonds link C296-C308 and C302-C319. Residues 350–431 enclose the PAN domain; the sequence is CNQSLVAGQE…GGNSINIRLA (82 aa). 2 disulfide bridges follow: C385-C406 and C389-C395. The N-linked (GlcNAc...) asparagine glycan is linked to N441. A helical transmembrane segment spans residues 444 to 464; the sequence is LWIIVFSVIGAFLLGLCIWIL. Over 465–842 the chain is Cytoplasmic; sequence WKFKKSLKAF…DVTFTTIVGR (378 aa). The 290-residue stretch at 525–814 folds into the Protein kinase domain; it reads FAEENKLGQG…PRQPTFHSFL (290 aa). ATP-binding positions include 531-539 and K553; that span reads LGQGGFGTV. S559 carries the phosphoserine modification. The interval 614–631 is caM-binding; sequence SKQGSLDWRKRWEVIGGI. D650 serves as the catalytic Proton acceptor. S654 and S667 each carry phosphoserine. T684 bears the Phosphothreonine mark. 2 positions are modified to phosphoserine: S728 and S830. A Phosphothreonine modification is found at T837.

Belongs to the protein kinase superfamily. Ser/Thr protein kinase family.

It localises to the cell membrane. The enzyme catalyses L-seryl-[protein] + ATP = O-phospho-L-seryl-[protein] + ADP + H(+). It catalyses the reaction L-threonyl-[protein] + ATP = O-phospho-L-threonyl-[protein] + ADP + H(+). This is Putative G-type lectin S-receptor-like serine/threonine-protein kinase At1g61610 from Arabidopsis thaliana (Mouse-ear cress).